Reading from the N-terminus, the 153-residue chain is Glucose-6-phosphate 1-dehydrogenase (153 aa).

Positions 21 and 120 each coordinate NADP(+). D-glucose 6-phosphate is bound at residue Lys-120.

This sequence belongs to the glucose-6-phosphate dehydrogenase family.

The protein localises to the cytoplasm. Its subcellular location is the cytosol. The enzyme catalyses D-glucose 6-phosphate + NADP(+) = 6-phospho-D-glucono-1,5-lactone + NADPH + H(+). It participates in carbohydrate degradation; pentose phosphate pathway; D-ribulose 5-phosphate from D-glucose 6-phosphate (oxidative stage): step 1/3. Cytosolic glucose-6-phosphate dehydrogenase that catalyzes the first and rate-limiting step of the oxidative branch within the pentose phosphate pathway/shunt, an alternative route to glycolysis for the dissimilation of carbohydrates and a major source of reducing power and metabolic intermediates for fatty acid and nucleic acid biosynthetic processes. This Sarcophaga bullata (Grey flesh fly) protein is Glucose-6-phosphate 1-dehydrogenase (ZW).